We begin with the raw amino-acid sequence, 356 residues long: Guanine nucleotide-binding protein alpha-15 subunit (356 aa).

Glycine 2 is lipidated: N-myristoyl glycine. Cysteine 5 carries S-palmitoyl cysteine lipidation. Residues 33–356 form the G-alpha domain; the sequence is GNQKLLLLGT…GRNLRGTGME (324 aa). The segment at 36-49 is G1 motif; that stretch reads KLLLLGTGECGKST. Residues 41–48, 177–183, 202–206, 271–274, and alanine 328 each bind GTP; these read GTGECGKS, LRIRIPT, DVGGQ, and NKRD. Positions 48 and 183 each coordinate Mg(2+). A G2 motif region spans residues 175-183; sequence DMLRIRIPT. The interval 198 to 207 is G3 motif; sequence FRIFDVGGQR. The tract at residues 267-274 is G4 motif; sequence ILFLNKRD. Residues 326 to 331 form a G5 motif region; the sequence is TCATDT.

It belongs to the G-alpha family. G proteins are composed of 3 units; alpha, beta and gamma. The alpha chain contains the guanine nucleotide binding site.

In terms of biological role, guanine nucleotide-binding proteins (G proteins) are involved as modulators or transducers in various transmembrane signaling systems. The polypeptide is Guanine nucleotide-binding protein alpha-15 subunit (gpa-15) (Caenorhabditis briggsae).